Reading from the N-terminus, the 589-residue chain is GTPase LSG1-2 (589 aa).

Positions 1–26 are disordered; it reads MGKSEKTSLGRSLVKHHNHMIQESKD. The CP-type G domain maps to 158 to 366; that stretch reads WRQLWRVLER…LCDCPGLVFP (209 aa). Positions 176 to 180 match the DARXP motif motif; that stretch reads DARDP. Positions 206 to 209 are G4; the sequence is NKAD. GTP is bound at residue 206–209; it reads NKAD. The interval 237–239 is G5; the sequence is AAT. A G1 region spans residues 315-322; sequence GYPNVGKS. 318-323 provides a ligand contact to GTP; it reads NVGKSS. The G2 stretch occupies residues 341 to 345; it reads GKTKH. The G3 stretch occupies residues 359–362; the sequence is DCPG. Gly-362 lines the GTP pocket. A compositionally biased stretch (acidic residues) spans 495 to 509; sequence GSESDDSAVGDETEN. Disordered regions lie at residues 495 to 515 and 534 to 589; these read GSES…VPGI and SKKV…LTMR. Residues 534–541 carry the Nuclear localization signal motif; the sequence is SKKVTAKK. Residues 534-558 are compositionally biased toward basic residues; sequence SKKVTAKKQTASHKQHKKPQRKKDR. Positions 580 to 589 are enriched in polar residues; sequence PANTGPLTMR.

The protein belongs to the TRAFAC class YlqF/YawG GTPase family. Ubiquitous, with the highest expression in reproductive and strongly dividing tissues.

The protein localises to the cytoplasm. It is found in the nucleus. Its function is as follows. GTPase involved in ribosome biogenesis. Binds to 23S rRNA and associates with 60S pre-ribosomes. Involved in early cotyledon and leaf development. This chain is GTPase LSG1-2, found in Arabidopsis thaliana (Mouse-ear cress).